The following is a 3902-amino-acid chain: Mediator of RNA polymerase II transcription subunit 12 (3902 aa).

Disordered stretches follow at residues 414 to 576, 619 to 674, 694 to 940, 977 to 1029, 1812 to 1831, 2463 to 2675, 2719 to 2771, 2876 to 3151, 3195 to 3549, and 3563 to 3902; these read ESLT…EELP, FEPF…NPKL, AFDP…LEAL, VVEK…PEPP, TSHK…TETR, TVEP…NRKQ, AGAS…SSSM, RIME…PEMQ, LQAG…SSNQ, and AGLN…QQQY. The span at 420–430 shows a compositional bias: acidic residues; sequence EPEEDPEEGPE. Positions 709-721 are enriched in pro residues; that stretch reads PTPPEAPPPPPPV. 4 stretches are compositionally biased toward basic and acidic residues: residues 740 to 802, 912 to 928, 977 to 1004, and 1018 to 1027; these read EDGK…EHLN, KAGD…KKPD, VVEK…EKLP, and KTPEKPKTPE. Residues 1812–1824 are compositionally biased toward basic residues; the sequence is TSHKTKDVKRKSA. Positions 2409 to 3902 are required for nuclear localization; it reads QTTRLDKVAK…MGQFPNQQQY (1494 aa). The segment covering 2474–2547 has biased composition (basic and acidic residues); the sequence is AAVKKPEEET…VTAKDTEKDT (74 aa). Residues 2480-2526 adopt a coiled-coil conformation; it reads EEETAEKKKDEAKKADEKTTKADDEKKKDETADAKKDNEKQKEEKDK. 3 stretches are compositionally biased toward low complexity: residues 2548-2566, 2614-2632, and 2734-2748; these read AAPT…AAPD, SRAN…SSTT, and PHPG…QHQG. The span at 2876–2979 shows a compositional bias: basic and acidic residues; the sequence is RIMEEQRILR…ERLERERVAR (104 aa). Composition is skewed to low complexity over residues 2980 to 3001, 3010 to 3143, 3196 to 3205, and 3226 to 3236; these read EALA…QAQQ, QQQR…QRNP, QAGQAAGQQQ, and PQQQQQQPQQP. Residues 3237 to 3248 show a composition bias toward polar residues; sequence GTSQIPNTTPTR. 3 stretches are compositionally biased toward low complexity: residues 3250–3275, 3284–3295, and 3317–3389; these read ANPM…GQPG, GQQQQNQFQRQG, and GQQQ…FGRQ. Residues 3391–3409 show a composition bias toward polar residues; that stretch reads APNQENFQQQPGFNQNAAG. Low complexity-rich tracts occupy residues 3410–3446, 3454–3539, and 3570–3619; these read QNYQ…QQQN, QSQQ…QGNQ, and SSGN…RPGM. The segment covering 3620 to 3649 has biased composition (gly residues); the sequence is GQQGMGQQGMGQQGGMGQSGRGQPGMGGQS. Composition is skewed to low complexity over residues 3663 to 3700, 3710 to 3742, and 3760 to 3830; these read MGQP…QQQH, QQGR…QQAQ, and QQQQ…HRGQ. Residues 3831 to 3841 show a composition bias toward gly residues; sequence GQQGHGMGGAG. A compositionally biased stretch (low complexity) spans 3842 to 3888; that stretch reads QQHQQVPQQQQNQYFQPQQQQDQRMQQQPGGQQQQQQGQSGQQQNNQ. Residues 3889-3902 are compositionally biased toward polar residues; that stretch reads HYNNMGQFPNQQQY.

It belongs to the Mediator complex subunit 12 family. Component of the Mediator complex.

The protein localises to the nucleus. Its function is as follows. Component of the Mediator complex, a coactivator involved in regulated gene transcription of nearly all RNA polymerase II-dependent genes. Mediator functions as a bridge to convey information from gene-specific regulatory proteins to the basal RNA polymerase II transcription machinery. Mediator is recruited to promoters by direct interactions with regulatory proteins and serves as a scaffold for the assembly of a functional preinitiation complex with RNA polymerase II and the general transcription factors. This Caenorhabditis briggsae protein is Mediator of RNA polymerase II transcription subunit 12 (dpy-22).